The primary structure comprises 269 residues: 5'-nucleotidase SurE (269 aa).

A divalent metal cation-binding residues include D8, D9, S39, and N92.

This sequence belongs to the SurE nucleotidase family. The cofactor is a divalent metal cation.

The protein resides in the cytoplasm. The enzyme catalyses a ribonucleoside 5'-phosphate + H2O = a ribonucleoside + phosphate. Its function is as follows. Nucleotidase that shows phosphatase activity on nucleoside 5'-monophosphates. The chain is 5'-nucleotidase SurE from Psychrobacter cryohalolentis (strain ATCC BAA-1226 / DSM 17306 / VKM B-2378 / K5).